The following is a 507-amino-acid chain: MKESQVYLERARSRQQHFLYSLIFREYIYGLAYSHNLNRSLFVENVGYDNKYSLLIVKRLITRMYQQNHLIISANDSNKNSFWGYNNNYYSQIISEGFSIVVEIPFFLQLSSSLEEAEIIKYYKNFRSIHSIFPFLEDKFTYLNYVSDIRIPYPIHLEILVQILRYWVKDAPFFHLLRLFLCNWNSFITTKNKKSISTFSKINPRFFLFLYNFYVCEYESIFVFLRNQSSHLPLKSFRVFFERIFFYAKREHLVKLFAKDFLYTLTLTFFKDPNIHYVRYQGKCILASKNAPFLMDKWKHYFIHLWQCFFDVWSQPRTININPLSEHSFKLLGYFSNVRLNRSVVRSQMLQNTFLIEIVIKKIDIIVPILPLIRSLAKAKFCNVLGQPISKPVWADSSDFDIIDRFLRISRNLSHYYKGSSKKKSLYRIKYILRLSCIKTLACKHKSTVRAFLKRSGSEEFLQEFFTEEEEILSLIFPRDSSTLERLSRNRIWYLDILFSNDLVHDE.

It belongs to the intron maturase 2 family. MatK subfamily.

The protein localises to the plastid. The protein resides in the chloroplast. In terms of biological role, usually encoded in the trnK tRNA gene intron. Probably assists in splicing its own and other chloroplast group II introns. The chain is Maturase K from Lens ervoides (Beaded lentil).